Reading from the N-terminus, the 290-residue chain is Shikimate dehydrogenase (NADP(+)) (290 aa).

Shikimate contacts are provided by residues Ser-20–Ser-22 and Thr-67. Lys-71 serves as the catalytic Proton acceptor. Residues Asn-92 and Asp-107 each coordinate shikimate. NADP(+) is bound by residues Gly-132–Ala-136 and Met-228. Shikimate is bound at residue Tyr-230. Gly-251 is an NADP(+) binding site.

This sequence belongs to the shikimate dehydrogenase family. Homodimer.

The enzyme catalyses shikimate + NADP(+) = 3-dehydroshikimate + NADPH + H(+). Its pathway is metabolic intermediate biosynthesis; chorismate biosynthesis; chorismate from D-erythrose 4-phosphate and phosphoenolpyruvate: step 4/7. Involved in the biosynthesis of the chorismate, which leads to the biosynthesis of aromatic amino acids. Catalyzes the reversible NADPH linked reduction of 3-dehydroshikimate (DHSA) to yield shikimate (SA). This chain is Shikimate dehydrogenase (NADP(+)), found in Geobacter sp. (strain M21).